We begin with the raw amino-acid sequence, 85 residues long: Kappa-theraphotoxin-Cg1d (85 aa).

The first 21 residues, 1-21 (MKVSVLITLAVLGVMFVWASA), serve as a signal peptide directing secretion. Residues 22–51 (AELEERGSDQRDSPAWLKSMERIFQSEERE) constitute a propeptide that is removed on maturation. 3 disulfides stabilise this stretch: C52/C66, C59/C71, and C65/C78.

This sequence belongs to the neurotoxin 10 (Hwtx-1) family. 28 (Jztx-11) subfamily. Expressed by the venom gland.

The protein localises to the secreted. Functionally, probable ion channel inhibitor. This chain is Kappa-theraphotoxin-Cg1d, found in Chilobrachys guangxiensis (Chinese earth tiger tarantula).